The primary structure comprises 306 residues: Beta-lactamase 1 (306 aa).

Positions Met-1–Lys-43 are cleaved as a signal peptide. Residue Ser-89 is the Acyl-ester intermediate of the active site. The Proton acceptor role is filled by Glu-185. Residue Lys-251–Gly-253 coordinates substrate.

The protein belongs to the class-A beta-lactamase family.

It is found in the secreted. It catalyses the reaction a beta-lactam + H2O = a substituted beta-amino acid. In terms of biological role, acts preferentially on penicillins. The chain is Beta-lactamase 1 (penPC) from Bacillus cereus.